Reading from the N-terminus, the 78-residue chain is Acyl carrier protein (78 aa).

Residues 2–77 (STIEERVKKI…AAIDYILSHQ (76 aa)) form the Carrier domain. Serine 37 bears the O-(pantetheine 4'-phosphoryl)serine mark.

Belongs to the acyl carrier protein (ACP) family. In terms of processing, 4'-phosphopantetheine is transferred from CoA to a specific serine of apo-ACP by AcpS. This modification is essential for activity because fatty acids are bound in thioester linkage to the sulfhydryl of the prosthetic group.

It is found in the cytoplasm. It functions in the pathway lipid metabolism; fatty acid biosynthesis. Carrier of the growing fatty acid chain in fatty acid biosynthesis. In Tolumonas auensis (strain DSM 9187 / NBRC 110442 / TA 4), this protein is Acyl carrier protein.